A 100-amino-acid polypeptide reads, in one-letter code: Aspartyl/glutamyl-tRNA(Asn/Gln) amidotransferase subunit C (100 aa).

Belongs to the GatC family. Heterotrimer of A, B and C subunits.

The enzyme catalyses L-glutamyl-tRNA(Gln) + L-glutamine + ATP + H2O = L-glutaminyl-tRNA(Gln) + L-glutamate + ADP + phosphate + H(+). The catalysed reaction is L-aspartyl-tRNA(Asn) + L-glutamine + ATP + H2O = L-asparaginyl-tRNA(Asn) + L-glutamate + ADP + phosphate + 2 H(+). Functionally, allows the formation of correctly charged Asn-tRNA(Asn) or Gln-tRNA(Gln) through the transamidation of misacylated Asp-tRNA(Asn) or Glu-tRNA(Gln) in organisms which lack either or both of asparaginyl-tRNA or glutaminyl-tRNA synthetases. The reaction takes place in the presence of glutamine and ATP through an activated phospho-Asp-tRNA(Asn) or phospho-Glu-tRNA(Gln). This is Aspartyl/glutamyl-tRNA(Asn/Gln) amidotransferase subunit C from Streptococcus pneumoniae serotype 19F (strain G54).